A 344-amino-acid polypeptide reads, in one-letter code: UDP-3-O-acylglucosamine N-acyltransferase (344 aa).

Histidine 248 acts as the Proton acceptor in catalysis.

Belongs to the transferase hexapeptide repeat family. LpxD subfamily. As to quaternary structure, homotrimer.

The enzyme catalyses a UDP-3-O-[(3R)-3-hydroxyacyl]-alpha-D-glucosamine + a (3R)-hydroxyacyl-[ACP] = a UDP-2-N,3-O-bis[(3R)-3-hydroxyacyl]-alpha-D-glucosamine + holo-[ACP] + H(+). It functions in the pathway bacterial outer membrane biogenesis; LPS lipid A biosynthesis. Its function is as follows. Catalyzes the N-acylation of UDP-3-O-acylglucosamine using 3-hydroxyacyl-ACP as the acyl donor. Is involved in the biosynthesis of lipid A, a phosphorylated glycolipid that anchors the lipopolysaccharide to the outer membrane of the cell. The polypeptide is UDP-3-O-acylglucosamine N-acyltransferase (Synechocystis sp. (strain ATCC 27184 / PCC 6803 / Kazusa)).